The primary structure comprises 629 residues: Probable potassium transport system protein Kup 3 (629 aa).

The next 12 membrane-spanning stretches (helical) occupy residues 20-40, 61-81, 106-126, 143-163, 171-191, 209-229, 253-273, 291-311, 343-363, 372-392, 400-420, and 425-445; these read LSLS…LYTF, VSLI…HFAL, PFII…GTIT, PSLK…LFAI, IGKA…ILGA, GLSF…GVFL, WFGL…ALVL, FLLP…QAII, IYIG…TIGF, AYGI…FIAL, IITS…FFAA, and FING…MMYI.

Belongs to the HAK/KUP transporter (TC 2.A.72) family.

The protein localises to the cell inner membrane. It carries out the reaction K(+)(in) + H(+)(in) = K(+)(out) + H(+)(out). Transport of potassium into the cell. Likely operates as a K(+):H(+) symporter. This Legionella pneumophila subsp. pneumophila (strain Philadelphia 1 / ATCC 33152 / DSM 7513) protein is Probable potassium transport system protein Kup 3.